Reading from the N-terminus, the 2256-residue chain is MLPCKKRSGVTESAQQQDDQEGEDLHLEAAVKPDTDQLPDCTSESLSWGQSHDSAGCPEVHSMQDVGSQLSVEGTPLSSKMLTQRVNLAVSEAVDVPVSQEIPVPSLESSHSLPVHMGKGRLQSTASRKGKKIAFMPGQVTREDGGDHTVPEEPPSGEHAEEVKAEGGELEMHSEGDLPSLSSGSQSAKPRAQPRKSFQPDGSAFPQEKSLGPLVRQAEEDMEDGGLFIPTEEQDGEESDKRKKTKKGTKRKRDGRGQEQGTMTYDPKVDDMLDRTLEDGAKQHNLTAVNVRNILHEVITNEHVVAMMKAAISETEDMPLFEPKMTRSKLKEVVEKGVVIPTWNISPIKKASETKQPPQFVDIHLEDDDSSDEEYQPDEEEEDETAEESLLESDVESAASSPRGVKRSRLRLSSEAAEADEESGVLSEVEKVATPALRHISAEVVPMGPPPPPKPKQTRDSTFMEKLNAVDEELAASPVCMDSFQPMEDSLIAFRTRSKMPLKDVPLGQLEAELQAPDITPDMYDPNTADDEDWKLWLGGLLNDDVENEDEADDDDDPEYNFLEDLDEPDTEDFRTDRAVRITKKEVNGLMEELFETVQSVVPSKFQDEMGFSNMEDDGPEEEERVTESRPSFNTPQALRFEEPLANLLNERHRTVKELLEQLKMKKSSVRQQPEVEKLKPQTEKVHQTLVLDPAQRSRLQQQMQQHVQLLTQIYLLTTSNPNLSSEASTTRVFLKELGTFAENSTALHQQFNPRFQTLFQPCNWVGAMQLIEDFTHISIDCSPHKTVKKTASEFPCLPKQVAWILATNKVFMYPELLPICSLKANNPRDKTIFTKAEDNLLALGLKHFEGTEFPKPLISKYLVTCKTAHQLTVRIKNLNLNRAPNNVIKFYKKTKQLPVLVRCCEEIQPHQWKPPIEKEEHRLPFWLKASLQSIQEELRNLAGGATAGGSVTAATETSTDQHLQKTSPVVGGDTQYPLLLPKGVVLKLKPGSKRFSRKAWRQKRPLVQKPLLIQPSPSVQPVFNPGKMATWPTQSEVPPSNTVVQIPHLIQPAAVLQTLPGFPSVGVCGEDSFESPAALPAMPSGSEARTSFPWSESQSAPPSSSAPKLMLPSLGPSKFRKPYVRRKPTRRKGAKASPCVKPAPIIHPTPVIFTVPATTVKVVSLGGGCNMIQPVTAAVAPSPQTIPITTLLVNPTSFPCSLNQPLVASSISPLLVSSNPLALPVTSLPEEKAHVSLDIAEGKNAPQNPEPKIKPQEPTPQCATVFSKEEPRSWHPSADTGNQEAVSESSACSWAAVKTEGQEGSSEKSVCGWTVVKTEDGGHAVQPLPQDPQDSLNSPSKDLLNMVKLEAEDCMEEISSDFPKQDIGEEVKEECCMELDRDSPQEKASSVSEMSKQTATPREETQAAKSPTVSQDAPDAIRDASKGLPQSTLSSMDQGTVLNSPPGKPEDSANADGQSVGTPAGTDTGAEKDGAEEEEEEDFDDLTQDEEDELSSASEESVLSVPELQETMEKLTWLASERRMSQEGESEEENSQEENSEPEEEEEEEAEGMETLQKEDEATDEAGGGAAEKPPSTLASPHTAPEVETSITPAGESIKAAGKGRSSHRARSRRGSRARASKDASKLLLLYDEDILDRDPLREQKDLAFAQAYLTRVREALQHIPGKYEDFLQIIYEFESNAQMHSAVDLFKSLQTLLHDWPQLLKDFAAFLLPEQALSCGLFEEQQAFEKSRKFLRQLEICFAENPSHHQKIIKVLQGCADCLPQDITELKTQMWQLLRGHDHLQDEFSIFFDHLRPAANRMGDFEEINWTEEKEYEFDGFEEVILPEVEEEEEPAKVSTASKSKRRKEIGVQHQDKESEWPEAAKDGSCPCHEGGPESKLKKSKRRNCHCSSKVCDSKSYKSKEPLELVGSGPLQEASTVPGTKEAGQGKDMSEEETMEGQENVEVSQNKTGRTTRKGEAPIPGSTVRTALLCSAEVTPIELSLEGPTCCSPETPRLPPQTGAVVCSVRRNQAGPEVVSCLGTSSIPPKEGEDQKAVANSETIAPLPETSETERLPGTVELPAPLPSPVSLSTRDTGRRHIYGKAGTQSWLLDNRAEAKAAHMVAPIRGTSSGASASEAAPTASREGLAEDSETQGKGPEAVLPKASEATVCANNSKVSSTGEKVVLWTREADRVILTMCQEQGAQPHTFSVISQQLGNKTPVEVSHRFRELMQLFHTACEASSEDEDDATSTSNADQLSDHGDLLSEEELDE.

3 disordered regions span residues 1-56 (MLPC…DSAG), 105-213 (PSLE…SLGP), and 227-266 (LFIPTEEQDGEESDKRKKTKKGTKRKRDGRGQEQGTMTYD). Residues 23-35 (EDLHLEAAVKPDT) are compositionally biased toward basic and acidic residues. Polar residues predominate over residues 40–53 (DCTSESLSWGQSHD). Positions 141 to 176 (TREDGGDHTVPEEPPSGEHAEEVKAEGGELEMHSEG) are enriched in basic and acidic residues. Basic residues predominate over residues 242 to 254 (RKKTKKGTKRKRD). At serine 346 the chain carries Phosphoserine. Over residues 366 to 395 (EDDDSSDEEYQPDEEEEDETAEESLLESDV) the composition is skewed to acidic residues. 3 disordered regions span residues 366–428 (EDDD…VLSE), 441–460 (SAEVVPMGPPPPPKPKQTRD), and 545–573 (DVENEDEADDDDDPEYNFLEDLDEPDTED). Residues 545–571 (DVENEDEADDDDDPEYNFLEDLDEPDT) are compositionally biased toward acidic residues. A required for interaction with YY1, SIN3A and HDAC1, and transcriptional repression activity region spans residues 609–1363 (EMGFSNMEDD…DCMEEISSDF (755 aa)). Residue serine 783 is modified to Phosphoserine. Composition is skewed to low complexity over residues 947 to 959 (TAGGSVTAATETS) and 1094 to 1115 (PWSESQSAPPSSSAPKLMLPSL). Disordered regions lie at residues 947–969 (TAGGSVTAATETSTDQHLQKTSP), 1078–1141 (AALP…SPCV), 1241–1288 (AEGK…EAVS), and 1360–1620 (SSDF…SRAR). Basic residues predominate over residues 1119 to 1135 (KFRKPYVRRKPTRRKGA). Residues 1364–1386 (PKQDIGEEVKEECCMELDRDSPQ) show a composition bias toward basic and acidic residues. Polar residues-rich tracts occupy residues 1387-1401 (EKASSVSEMSKQTAT) and 1429-1444 (LPQSTLSSMDQGTVLN). Position 1445 is a phosphoserine (serine 1445). Over residues 1475–1495 (GAEEEEEEDFDDLTQDEEDEL) the composition is skewed to acidic residues. A compositionally biased stretch (low complexity) spans 1496–1510 (SSASEESVLSVPELQ). Over residues 1529-1553 (GESEEENSQEENSEPEEEEEEEAEG) the composition is skewed to acidic residues. Residues 1606–1620 (RSSHRARSRRGSRAR) are compositionally biased toward basic residues. PAH domains follow at residues 1644–1716 (EQKD…LLPE) and 1726–1797 (EQQA…FDHL). 2 disordered regions span residues 1831-1886 (VEEE…LKKS) and 1909-1966 (LELV…APIP). Residues 1851-1868 (EIGVQHQDKESEWPEAAK) are compositionally biased toward basic and acidic residues. Residues serine 1921 and serine 1994 each carry the phosphoserine modification. Disordered stretches follow at residues 2050–2078 (PETSETERLPGTVELPAPLPSPVSLSTRD) and 2110–2148 (IRGTSSGASASEAAPTASREGLAEDSETQGKGPEAVLPK). The span at 2111-2129 (RGTSSGASASEAAPTASRE) shows a compositional bias: low complexity. Residues 2163–2216 (STGEKVVLWTREADRVILTMCQEQGAQPHTFSVISQQLGNKTPVEVSHRFRELM) form the Myb-like domain. A disordered region spans residues 2223-2256 (CEASSEDEDDATSTSNADQLSDHGDLLSEEELDE).

In terms of assembly, found in a complex with YY1, SIN3A and HDAC1.

It is found in the nucleus. In terms of biological role, has transcriptional repressor activity, probably as part of a complex with YY1, SIN3A and HDAC1. Required for B cell lymphopoiesis. This Rattus norvegicus (Rat) protein is GON-4-like protein (Gon4l).